A 93-amino-acid chain; its full sequence is Integration host factor subunit beta (93 aa).

The protein belongs to the bacterial histone-like protein family. As to quaternary structure, heterodimer of an alpha and a beta chain.

In terms of biological role, this protein is one of the two subunits of integration host factor, a specific DNA-binding protein that functions in genetic recombination as well as in transcriptional and translational control. The protein is Integration host factor subunit beta of Tolumonas auensis (strain DSM 9187 / NBRC 110442 / TA 4).